Reading from the N-terminus, the 403-residue chain is 4-hydroxy-3-methylbut-2-enyl diphosphate reductase (403 aa).

A [4Fe-4S] cluster-binding site is contributed by C66. H96 contributes to the (2E)-4-hydroxy-3-methylbut-2-enyl diphosphate binding site. H96 lines the dimethylallyl diphosphate pocket. Residue H96 participates in isopentenyl diphosphate binding. C157 contributes to the [4Fe-4S] cluster binding site. H185 contacts (2E)-4-hydroxy-3-methylbut-2-enyl diphosphate. H185 is a dimethylallyl diphosphate binding site. Isopentenyl diphosphate is bound at residue H185. The active-site Proton donor is E187. T250 serves as a coordination point for (2E)-4-hydroxy-3-methylbut-2-enyl diphosphate. Residue C288 coordinates [4Fe-4S] cluster. Residues S317, S318, N319, and S379 each contribute to the (2E)-4-hydroxy-3-methylbut-2-enyl diphosphate site. S317, S318, N319, and S379 together coordinate dimethylallyl diphosphate. Isopentenyl diphosphate-binding residues include S317, S318, N319, and S379.

Belongs to the IspH family. It depends on [4Fe-4S] cluster as a cofactor.

The catalysed reaction is isopentenyl diphosphate + 2 oxidized [2Fe-2S]-[ferredoxin] + H2O = (2E)-4-hydroxy-3-methylbut-2-enyl diphosphate + 2 reduced [2Fe-2S]-[ferredoxin] + 2 H(+). It catalyses the reaction dimethylallyl diphosphate + 2 oxidized [2Fe-2S]-[ferredoxin] + H2O = (2E)-4-hydroxy-3-methylbut-2-enyl diphosphate + 2 reduced [2Fe-2S]-[ferredoxin] + 2 H(+). The protein operates within isoprenoid biosynthesis; dimethylallyl diphosphate biosynthesis; dimethylallyl diphosphate from (2E)-4-hydroxy-3-methylbutenyl diphosphate: step 1/1. It participates in isoprenoid biosynthesis; isopentenyl diphosphate biosynthesis via DXP pathway; isopentenyl diphosphate from 1-deoxy-D-xylulose 5-phosphate: step 6/6. In terms of biological role, catalyzes the conversion of 1-hydroxy-2-methyl-2-(E)-butenyl 4-diphosphate (HMBPP) into a mixture of isopentenyl diphosphate (IPP) and dimethylallyl diphosphate (DMAPP). Acts in the terminal step of the DOXP/MEP pathway for isoprenoid precursor biosynthesis. The protein is 4-hydroxy-3-methylbut-2-enyl diphosphate reductase of Rippkaea orientalis (strain PCC 8801 / RF-1) (Cyanothece sp. (strain PCC 8801)).